Here is a 647-residue protein sequence, read N- to C-terminus: MLPSGKRKADAFSCTSAARVTAKLALSFLALSTTPLVNAFSYEEPNAQIVLPIDASPIKPLLPEPPAPAEHKFTLRHIYHHGTYEHPTLHRKKDVPAQNADVWLAADDEYGQERIGTLKARSSPVRIQRLADRRPSVVDPMVAYARQQGYASVLSPEAWTMDEVAGPDITDKDTIISLALMAADAYVQTPDGADWEDVGAPFNRSLDFGWEGDGLRGHVFADETNSTIVIGLKGTSVAVFDGDGTTTNDKVNDNLFFSCCCAQQGPWTWHQVCDCATGTYSCNNTCVVQALRQENRYYQAGRELYANVTELYPDANVWIVGHSLGGAMSSLLGLTYGDPVVTFEAVPEALPAKRLGLPIPPGSDPDAPQTREYTGAFHIGHTADPVYVGTCNGATATCAIGGYAMESACHTGRECVYDTVGDLGWRVGIGTHKIRVVISDVLRKYEKVPECKFTPECRDCGNWKMYESNGTETTTTSSTPTSTSMTRTRTETCKTPGWWGCLDETTTTTGMATTTTSEMPTTSTTTCHTPGWFGCKDKTTTSTASTTTTPIATTATTTTTSSTTCLTPGKFWGCYDKTATTDIGSPSTSTELTITSAPALPSSVLTPSATATPPEGQPDDSGKRCRGRTWYGVCKDYEGGEGPVNDL.

The Cytoplasmic segment spans residues 1–18 (MLPSGKRKADAFSCTSAA). Residues 19 to 39 (RVTAKLALSFLALSTTPLVNA) traverse the membrane as a helical; Signal-anchor for type II membrane protein segment. Topologically, residues 40 to 647 (FSYEEPNAQI…EGGEGPVNDL (608 aa)) are lumenal. Asparagine 203, asparagine 225, asparagine 283, and asparagine 307 each carry an N-linked (GlcNAc...) asparagine glycan. Serine 323 functions as the Charge relay system in the catalytic mechanism. The N-linked (GlcNAc...) asparagine glycan is linked to asparagine 469. A disordered region spans residues 597-626 (APALPSSVLTPSATATPPEGQPDDSGKRCR).

This sequence belongs to the AB hydrolase superfamily. Lipase family. Binds to both phosphatidylinositol (PI) and phosphatidylinositol 3,5-bisphosphate (PIP2).

It is found in the endosome. It localises to the multivesicular body membrane. The protein localises to the prevacuolar compartment membrane. It carries out the reaction a triacylglycerol + H2O = a diacylglycerol + a fatty acid + H(+). Its function is as follows. Lipase which is essential for lysis of subvacuolar cytoplasm to vacuole targeted bodies and intravacuolar autophagic bodies. Involved in the lysis of intravacuolar multivesicular body (MVB) vesicles. The intravacuolar membrane disintegration by atg15 is critical to life span extension. This is Putative lipase atg15 (atg15) from Neurospora crassa (strain ATCC 24698 / 74-OR23-1A / CBS 708.71 / DSM 1257 / FGSC 987).